The sequence spans 247 residues: uncharacterized protein (247 aa).

The N-acetyltransferase domain maps to 102-247 (RSIMSRTNDN…ISEHHYRIKR (146 aa)).

The protein belongs to the acetyltransferase family.

This is an uncharacterized protein from Bacillus subtilis (strain 168).